A 595-amino-acid chain; its full sequence is Guanylate-binding protein 3 (595 aa).

The segment at 1–309 (MAPEIHMTGP…NAISRGDLPC (309 aa)) is GTPase domain (Globular). The GB1/RHD3-type G domain maps to 35 to 276 (TQPVVVVAIV…FCSYIFSNSK (242 aa)). GTP is bound by residues 45–52 (GLYRTGKS), 67–69 (LGS), and 97–101 (DTEGL). A coiled-coil region spans residues 482–595 (EKEKEIEVEC…KRYMSHKLKI (114 aa)).

Belongs to the TRAFAC class dynamin-like GTPase superfamily. GB1/RHD3 GTPase family. GB1 subfamily. In terms of assembly, heterodimer with other family members, including GBP1, GBP2 and GBP5. Dimerization regulates subcellular location.

Its subcellular location is the cytoplasm. It localises to the perinuclear region. The protein localises to the golgi apparatus membrane. It carries out the reaction GTP + H2O = GDP + phosphate + H(+). Interferon (IFN)-inducible GTPase that plays important roles in innate immunity against a diverse range of bacterial, viral and protozoan pathogens. Hydrolyzes GTP very efficiently; GDP rather than GMP is the major reaction product. Following infection, recruited to the pathogen-containing vacuoles or vacuole-escaped bacteria and acts as a positive regulator of inflammasome assembly by promoting the release of inflammasome ligands from bacteria. Acts by promoting lysis of pathogen-containing vacuoles, releasing pathogens into the cytosol. Following pathogen release in the cytosol, promotes recruitment of proteins that mediate bacterial cytolysis: this liberates ligands that are detected by inflammasomes, such as lipopolysaccharide (LPS) that activates the non-canonical CASP4/CASP11 inflammasome or double-stranded DNA (dsDNA) that activates the AIM2 inflammasome. Exhibits antiviral activity against influenza virus. Its function is as follows. Shows the most prominent antiviral activity in epithelial cells. This is Guanylate-binding protein 3 (GBP3) from Homo sapiens (Human).